We begin with the raw amino-acid sequence, 189 residues long: Glucose-6-phosphate isomerase (189 aa).

Positions 88, 90, 97, and 136 each coordinate Fe cation.

It belongs to the archaeal-type GPI family. Homodimer.

It is found in the cytoplasm. The enzyme catalyses alpha-D-glucose 6-phosphate = beta-D-fructose 6-phosphate. It functions in the pathway carbohydrate degradation; glycolysis; D-glyceraldehyde 3-phosphate and glycerone phosphate from D-glucose: step 2/4. The protein is Glucose-6-phosphate isomerase of Thermococcus kodakarensis (strain ATCC BAA-918 / JCM 12380 / KOD1) (Pyrococcus kodakaraensis (strain KOD1)).